We begin with the raw amino-acid sequence, 102 residues long: Small ribosomal subunit protein bS6 (102 aa).

Belongs to the bacterial ribosomal protein bS6 family.

In terms of biological role, binds together with bS18 to 16S ribosomal RNA. The sequence is that of Small ribosomal subunit protein bS6 from Deinococcus geothermalis (strain DSM 11300 / CIP 105573 / AG-3a).